The chain runs to 332 residues: UDP-N-acetylenolpyruvoylglucosamine reductase (332 aa).

Residues 15 to 184 enclose the FAD-binding PCMH-type domain; that stretch reads IDVSAACFLE…TYVSFRLSKR (170 aa). Arg160 is an active-site residue. Ser232 acts as the Proton donor in catalysis. Glu328 is a catalytic residue.

The protein belongs to the MurB family. FAD serves as cofactor.

It is found in the cytoplasm. The enzyme catalyses UDP-N-acetyl-alpha-D-muramate + NADP(+) = UDP-N-acetyl-3-O-(1-carboxyvinyl)-alpha-D-glucosamine + NADPH + H(+). It participates in cell wall biogenesis; peptidoglycan biosynthesis. Its function is as follows. Cell wall formation. The polypeptide is UDP-N-acetylenolpyruvoylglucosamine reductase (Bacteroides fragilis (strain YCH46)).